Reading from the N-terminus, the 394-residue chain is NAD(P)H-quinone oxidoreductase subunit H (394 aa).

Belongs to the complex I 49 kDa subunit family. NDH-1 can be composed of about 15 different subunits; different subcomplexes with different compositions have been identified which probably have different functions.

The protein localises to the cellular thylakoid membrane. It carries out the reaction a plastoquinone + NADH + (n+1) H(+)(in) = a plastoquinol + NAD(+) + n H(+)(out). The enzyme catalyses a plastoquinone + NADPH + (n+1) H(+)(in) = a plastoquinol + NADP(+) + n H(+)(out). Its function is as follows. NDH-1 shuttles electrons from an unknown electron donor, via FMN and iron-sulfur (Fe-S) centers, to quinones in the respiratory and/or the photosynthetic chain. The immediate electron acceptor for the enzyme in this species is believed to be plastoquinone. Couples the redox reaction to proton translocation, and thus conserves the redox energy in a proton gradient. Cyanobacterial NDH-1 also plays a role in inorganic carbon-concentration. The protein is NAD(P)H-quinone oxidoreductase subunit H of Synechococcus sp. (strain RCC307).